Reading from the N-terminus, the 338-residue chain is MREKLEALLADAVAELSQVSTEDGLQELRVKYLGKKGELTAVMKGLGALSPEERPVIGQVVNTVKGELEAKIESAGLKIREDIKAEKLRSERVDVTLPGRRRPIGTRHPITLVIEEITAIFAGLGFLVAEGPEIEHDFYNFEALNFPKDHPARDMQDTFFISDTVLLRTHTSPVQIRTMLKQAPPVRIIAPGTVYRCDSDATHSPMFHQIEGLMVDKGVTFGDLKGILTIFINQLFGQGTGVRLRPSFFPFTEPSAEVDIACVICKGKGCRVCKNTGWLEILGAGMVDPEVYRHVNYDSEIYSGFAFGMGIERIAMLKYGISDMRLLFENDLRFLKQF.

Glu-253 lines the Mg(2+) pocket.

It belongs to the class-II aminoacyl-tRNA synthetase family. Phe-tRNA synthetase alpha subunit type 1 subfamily. As to quaternary structure, tetramer of two alpha and two beta subunits. The cofactor is Mg(2+).

It is found in the cytoplasm. The enzyme catalyses tRNA(Phe) + L-phenylalanine + ATP = L-phenylalanyl-tRNA(Phe) + AMP + diphosphate + H(+). The polypeptide is Phenylalanine--tRNA ligase alpha subunit (Geotalea uraniireducens (strain Rf4) (Geobacter uraniireducens)).